A 285-amino-acid polypeptide reads, in one-letter code: 4-diphosphocytidyl-2-C-methyl-D-erythritol kinase (285 aa).

Lys14 is an active-site residue. An ATP-binding site is contributed by 97–107; sequence PMGGGIGGGSS. Asp139 is a catalytic residue.

This sequence belongs to the GHMP kinase family. IspE subfamily.

The catalysed reaction is 4-CDP-2-C-methyl-D-erythritol + ATP = 4-CDP-2-C-methyl-D-erythritol 2-phosphate + ADP + H(+). Its pathway is isoprenoid biosynthesis; isopentenyl diphosphate biosynthesis via DXP pathway; isopentenyl diphosphate from 1-deoxy-D-xylulose 5-phosphate: step 3/6. Functionally, catalyzes the phosphorylation of the position 2 hydroxy group of 4-diphosphocytidyl-2C-methyl-D-erythritol. The chain is 4-diphosphocytidyl-2-C-methyl-D-erythritol kinase from Tolumonas auensis (strain DSM 9187 / NBRC 110442 / TA 4).